A 368-amino-acid chain; its full sequence is tRNA-specific 2-thiouridylase MnmA (368 aa).

ATP contacts are provided by residues 11–18 and methionine 37; that span reads GMSGGVDS. Residues 97–99 are interaction with target base in tRNA; sequence NPD. Cysteine 102 acts as the Nucleophile in catalysis. An intrachain disulfide couples cysteine 102 to cysteine 199. Glycine 127 provides a ligand contact to ATP. The segment at 149–151 is interaction with tRNA; that stretch reads KDQ. Catalysis depends on cysteine 199, which acts as the Cysteine persulfide intermediate. Residues 311–312 are interaction with tRNA; sequence RY.

Belongs to the MnmA/TRMU family. In terms of assembly, interacts with TusE.

It localises to the cytoplasm. It catalyses the reaction S-sulfanyl-L-cysteinyl-[protein] + uridine(34) in tRNA + AH2 + ATP = 2-thiouridine(34) in tRNA + L-cysteinyl-[protein] + A + AMP + diphosphate + H(+). Functionally, catalyzes the 2-thiolation of uridine at the wobble position (U34) of tRNA(Lys), tRNA(Glu) and tRNA(Gln), leading to the formation of s(2)U34, the first step of tRNA-mnm(5)s(2)U34 synthesis. Sulfur is provided by IscS, via a sulfur-relay system. Binds ATP and its substrate tRNAs. This is tRNA-specific 2-thiouridylase MnmA from Salmonella choleraesuis (strain SC-B67).